Reading from the N-terminus, the 427-residue chain is Histidine--tRNA ligase (427 aa).

This sequence belongs to the class-II aminoacyl-tRNA synthetase family. Homodimer.

Its subcellular location is the cytoplasm. The enzyme catalyses tRNA(His) + L-histidine + ATP = L-histidyl-tRNA(His) + AMP + diphosphate + H(+). In Mycobacterium leprae (strain TN), this protein is Histidine--tRNA ligase (hisS).